We begin with the raw amino-acid sequence, 291 residues long: 33 kDa chaperonin (291 aa).

Cystine bridges form between Cys229–Cys231 and Cys262–Cys265.

This sequence belongs to the HSP33 family. In terms of processing, under oxidizing conditions two disulfide bonds are formed involving the reactive cysteines. Under reducing conditions zinc is bound to the reactive cysteines and the protein is inactive.

The protein resides in the cytoplasm. Redox regulated molecular chaperone. Protects both thermally unfolding and oxidatively damaged proteins from irreversible aggregation. Plays an important role in the bacterial defense system toward oxidative stress. The polypeptide is 33 kDa chaperonin (Vibrio parahaemolyticus serotype O3:K6 (strain RIMD 2210633)).